A 737-amino-acid chain; its full sequence is MPLNRTLSMSSLPGLEDWEDEFDLENAVLFEVAWEVANKVGGIYTVLQTKAKVTGDEWGDNYFLVGPYTEQGVRTQVELLEAPTPALKRTLDSMNSKGCKVYFGRWLIEGGPLVVLLDVGASAWALERWKGELWDTCNIGVPWYDREANDAVLFGFLTTWFLGEFLAQSEEKPHVVAHFHEWLAGVGLCLCRARRLPVATIFTTHATLLGRYLCAGAVDFYNNLENFNVDKEAGERQIYHRYCMERAAAHCAHVFTTVSQITAIEAQHLLKRKPDIVTPNGLNVKKFSAMHEFQNLHAQSKARIQEFVRGHFYGHLDFNLDKTLYFFIAGRYEFSNKGADVFLEALARLNYLLRVNGSEQTVVAFFIMPARTNNFNVETLKGQAVRKQLWDTANTVKEKFGRKLYESLLVGSLPDMNKMLDKEDFTMMKRAIFATQRQSFPPVCTHNMLDDSSDPILTTIRRIGLFNSSADRVKVIFHPEFLSSTSPLLPVDYEEFVRGCHLGVFPSYYEPWGYTPAECTVMGIPSISTNLSGFGCFMEEHIADPSAYGIYILDRRFRSLDDSCSQLTSFLYSFCQQSRRQRIIQRNRTERLSDLLDWKYLGRYYMSARHMALSKAFPEHFTYEPNEADAAQGYRYPRPASVPPSPSLSRHSSPHQSEDEEDPRNGPLEEDGERYDEDEEAAKDRRNIRAPEWPRRASCTSSTSGSKRNSVDTATSSSLSTPSEPLSPTSSLGEERN.

S8 carries the post-translational modification Phosphoserine; by AMPK and PKA. S11 is modified (phosphoserine). K39 contributes to the UDP binding site. 2 residues coordinate UDP-alpha-D-glucose: H205 and R211. Alpha-D-glucose 6-phosphate contacts are provided by H291, E292, Q294, H297, and K301. Residue R331 coordinates UDP. A UDP-alpha-D-glucose-binding site is contributed by R331. S412 carries the phosphoserine modification. H501 serves as a coordination point for alpha-D-glucose 6-phosphate. Residues E510, W512, and G513 each contribute to the UDP-alpha-D-glucose site. T515 is a UDP binding site. Positions 582 and 586 each coordinate alpha-D-glucose 6-phosphate. The disordered stretch occupies residues 634–737; that stretch reads YRYPRPASVP…PTSSLGEERN (104 aa). 4 positions are modified to phosphoserine: S641, S645, S649, and S652. S653 is subject to Phosphoserine; by GSK3-alpha and GSK3-beta. Residue S657 is modified to Phosphoserine; by CK2. Acidic residues predominate over residues 658-681; that stretch reads EDEEDPRNGPLEEDGERYDEDEEA. Over residues 682–695 the composition is skewed to basic and acidic residues; it reads AKDRRNIRAPEWPR. S698 carries the phosphoserine modification. A compositionally biased stretch (polar residues) spans 698–714; that stretch reads SCTSSTSGSKRNSVDTA. T700 bears the Phosphothreonine mark. The residue at position 710 (S710) is a Phosphoserine. Residues 715-737 are compositionally biased toward low complexity; that stretch reads TSSSLSTPSEPLSPTSSLGEERN. T721 carries the phosphothreonine modification. S727 and S731 each carry phosphoserine.

Belongs to the glycosyltransferase 3 family. In terms of assembly, part of the GYS1-GYG1 complex, a heterooctamer composed of a tetramer of GYS1 and 2 dimers of GYG1, where each GYS1 protomer binds to one GYG1 subunit (via GYG1 C-terminus); the GYS1 tetramer may dissociate from GYG1 dimers to continue glycogen polymerization on its own. Post-translationally, phosphorylation at Ser-8 by AMPK inactivates the enzyme activity. Primed phosphorylation at Ser-657 (site 5) by CSNK2A1 and CSNK2A2 is required for inhibitory phosphorylation at Ser-641 (site 3a), Ser-645 (site 3b), Ser-649 (site 3c) and Ser-653 (site 4) by GSK3A an GSK3B. Phosphorylated at Ser-641 by DYRK2, leading to inactivation. Phosphorylated at Ser-641 by PASK, leading to inactivation; phosphorylation by PASK is inhibited by glycogen. Dephosphorylation at Ser-641 and Ser-645 by PP1 activates the enzyme. In terms of tissue distribution, expressed in skeletal muscle and most other cell types where glycogen is present.

The enzyme catalyses [(1-&gt;4)-alpha-D-glucosyl](n) + UDP-alpha-D-glucose = [(1-&gt;4)-alpha-D-glucosyl](n+1) + UDP + H(+). The protein operates within glycan biosynthesis; glycogen biosynthesis. Its activity is regulated as follows. Allosteric activation by glucose-6-phosphate. Phosphorylation reduces enzyme activity by constraining a tense conformation of the tetramer through inter-subunit interaction. Phosphorylation reduces the activity towards UDP-glucose. When in the non-phosphorylated state, glycogen synthase does not require glucose-6-phosphate as an allosteric activator; when phosphorylated it does. Its function is as follows. Glycogen synthase participates in the glycogen biosynthetic process along with glycogenin and glycogen branching enzyme. Extends the primer composed of a few glucose units formed by glycogenin by adding new glucose units to it. In this context, glycogen synthase transfers the glycosyl residue from UDP-Glc to the non-reducing end of alpha-1,4-glucan. The sequence is that of Glycogen [starch] synthase, muscle from Homo sapiens (Human).